A 385-amino-acid polypeptide reads, in one-letter code: Homoserine O-succinyltransferase (385 aa).

In terms of domain architecture, AB hydrolase-1 spans 51 to 360 (NAVLICHALS…DSPHGHDAFL (310 aa)). The Nucleophile role is filled by Ser157. Arg227 contacts substrate. Catalysis depends on residues Asp323 and His356. Asp357 is a substrate binding site.

The protein belongs to the AB hydrolase superfamily. MetX family. In terms of assembly, homodimer.

It localises to the cytoplasm. It carries out the reaction L-homoserine + succinyl-CoA = O-succinyl-L-homoserine + CoA. It functions in the pathway amino-acid biosynthesis; L-methionine biosynthesis via de novo pathway; O-succinyl-L-homoserine from L-homoserine: step 1/1. Transfers a succinyl group from succinyl-CoA to L-homoserine, forming succinyl-L-homoserine. This is Homoserine O-succinyltransferase from Hahella chejuensis (strain KCTC 2396).